The following is a 131-amino-acid chain: Small ribosomal subunit protein uS8 (131 aa).

It belongs to the universal ribosomal protein uS8 family. Part of the 30S ribosomal subunit. Contacts proteins S5 and S12.

Its function is as follows. One of the primary rRNA binding proteins, it binds directly to 16S rRNA central domain where it helps coordinate assembly of the platform of the 30S subunit. This is Small ribosomal subunit protein uS8 from Chlorobaculum tepidum (strain ATCC 49652 / DSM 12025 / NBRC 103806 / TLS) (Chlorobium tepidum).